The primary structure comprises 473 residues: Serine palmitoyltransferase 1 (473 aa).

Residues 1 to 15 (MATVAEQWVLVEMVQ) lie on the Lumenal side of the membrane. The tract at residues 1 to 66 (MATVAEQWVL…KEELIEEWQP (66 aa)) is interaction with SPTLC2. The helical transmembrane segment at 16-36 (ALYEAPAYHLILEGILILWII) threads the bilayer. Over 37 to 473 (RLVFSKTYKL…IREAAQAVLL (437 aa)) the chain is Cytoplasmic. A Phosphotyrosine; by ABL modification is found at tyrosine 164.

Belongs to the class-II pyridoxal-phosphate-dependent aminotransferase family. As to quaternary structure, component of the serine palmitoyltransferase (SPT) complex, which is also composed of SPTLC2 or SPTLC3 and SPTSSA or SPTSSB. The heterodimer with SPTLC2 or SPTLC3 forms the catalytic core of the enzyme, while SPTSSA or SPTSSB subunits determine substrate specificity. SPT also interacts with ORMDL proteins, especially ORMDL3, which negatively regulate SPT activity in the presence of ceramides. Forms dimers of heterodimers with SPTLC2. Interacts with RTN4 (isoform B). Pyridoxal 5'-phosphate is required as a cofactor. In terms of processing, phosphorylation at Tyr-164 inhibits activity and promotes cell survival. As to expression, expressed in astrocytes.

The protein resides in the endoplasmic reticulum membrane. It carries out the reaction L-serine + hexadecanoyl-CoA + H(+) = 3-oxosphinganine + CO2 + CoA. The enzyme catalyses octadecanoyl-CoA + L-serine + H(+) = 3-oxoeicosasphinganine + CO2 + CoA. It catalyses the reaction tetradecanoyl-CoA + L-serine + H(+) = 3-oxohexadecasphinganine + CO2 + CoA. The catalysed reaction is dodecanoyl-CoA + L-serine + H(+) = 3-oxotetradecasphinganine + CO2 + CoA. It participates in lipid metabolism; sphingolipid metabolism. SPT complex catalytic activity is negatively regulated by ORMDL proteins, including ORMDL3, in the presence of ceramides. This mechanism allows to maintain ceramide levels at sufficient concentrations for the production of complex sphingolipids, but which prevents the accumulation of ceramides to levels that trigger apoptosis. Functionally, component of the serine palmitoyltransferase multisubunit enzyme (SPT) that catalyzes the initial and rate-limiting step in sphingolipid biosynthesis by condensing L-serine and activated acyl-CoA (most commonly palmitoyl-CoA) to form long-chain bases. The SPT complex is also composed of SPTLC2 or SPTLC3 and SPTSSA or SPTSSB. Within this complex, the heterodimer with SPTLC2 or SPTLC3 forms the catalytic core. The composition of the serine palmitoyltransferase (SPT) complex determines the substrate preference. The SPTLC1-SPTLC2-SPTSSA complex shows a strong preference for C16-CoA substrate, while the SPTLC1-SPTLC3-SPTSSA isozyme uses both C14-CoA and C16-CoA as substrates, with a slight preference for C14-CoA. The SPTLC1-SPTLC2-SPTSSB complex shows a strong preference for C18-CoA substrate, while the SPTLC1-SPTLC3-SPTSSB isozyme displays an ability to use a broader range of acyl-CoAs, without apparent preference. Required for adipocyte cell viability and metabolic homeostasis. This is Serine palmitoyltransferase 1 from Rattus norvegicus (Rat).